A 552-amino-acid polypeptide reads, in one-letter code: MGRSPEMEVDARSGYCAATRTFRSRRADVPLPADPEVDVVSFLASRRHSGVVALVDAATGRRITFTELWRAVAGAASALAAHPVSLRKGHVALILSPNSVHFPVAALAAMSLGAVLTTANPLNTPAEIAKQVADARPVLAFTTRELLPKLPRAHDLRVVLLESARLPGDSSDPRIVATIEEISATTPDPARRKDRVTQDDPATLLYSSGTTGPSKGVVATHRSLISMVQIIMTRFRLEGSDKTETFLCTVPMFHVYGLVAFATGLLGCGATVVVLSKYELPEMLRSINAYGVTYLPLVPPILVAMVAHPKPLPLGQMRKVLSGGAPLGKELIEGFREKYPQVEILQGYGLTESTAIGASTDSAEESRRYGTAGLLSPNTEAKIVDPDSGEALPVNRTGELWIRGPYVMKGYFKNAEATQSTLTPDGWLKTGDLCYIDEDGYLFVVDRLKELIKYKGYQVPPAELEALLLTHPEVTDVAVIPFPDREVGQFPMAYIVRKKGSNLSEREVMEFVAKQVAPYKKVRKVAFVTDIPKNASGKILRKDLIKLATSKL.

The disordered stretch occupies residues 182-205 (ISATTPDPARRKDRVTQDDPATLL). The span at 189–198 (PARRKDRVTQ) shows a compositional bias: basic and acidic residues. ATP is bound by residues Ser-207, Ser-208, Gly-209, Thr-210, Thr-211, and Lys-215. Tyr-256 contacts (E)-4-coumaroyl-AMP. Lys-277 is a CoA binding site. The segment at 279–346 (ELPEMLRSIN…EKYPQVEILQ (68 aa)) is SBD1. (E)-4-coumaroyl-AMP contacts are provided by Gly-324, Gln-346, Gly-347, and Thr-351. Gln-346, Gly-347, Thr-351, Asp-432, and Arg-447 together coordinate ATP. Residues 347-411 (GYGLTESTAI…IRGPYVMKGY (65 aa)) are SBD2. Residues Lys-449 and Lys-453 each contribute to the (E)-4-coumaroyl-AMP site. 2 residues coordinate CoA: Lys-455 and Gly-456. Lys-538 is an ATP binding site.

Belongs to the ATP-dependent AMP-binding enzyme family. The cofactor is Mg(2+).

It carries out the reaction (E)-4-coumarate + ATP + CoA = (E)-4-coumaroyl-CoA + AMP + diphosphate. The enzyme catalyses (E)-4-coumarate + ATP + H(+) = (E)-4-coumaroyl-AMP + diphosphate. It catalyses the reaction (E)-4-coumaroyl-AMP + CoA = (E)-4-coumaroyl-CoA + AMP + H(+). Functionally, carboxylate--CoA ligase that may use 4-coumarate as substrate. Follows a two-step reaction mechanism, wherein the carboxylate substrate first undergoes adenylation by ATP, followed by a thioesterification in the presence of CoA to yield the final CoA thioester. The sequence is that of 4-coumarate--CoA ligase-like 4 (4CLL4) from Oryza sativa subsp. japonica (Rice).